The primary structure comprises 561 residues: DNA ligase B (561 aa).

Lysine 128 serves as the catalytic N6-AMP-lysine intermediate.

The protein belongs to the NAD-dependent DNA ligase family. LigB subfamily.

The enzyme catalyses NAD(+) + (deoxyribonucleotide)n-3'-hydroxyl + 5'-phospho-(deoxyribonucleotide)m = (deoxyribonucleotide)n+m + AMP + beta-nicotinamide D-nucleotide.. Catalyzes the formation of phosphodiester linkages between 5'-phosphoryl and 3'-hydroxyl groups in double-stranded DNA using NAD as a coenzyme and as the energy source for the reaction. The polypeptide is DNA ligase B (Pseudomonas syringae pv. syringae (strain B728a)).